The sequence spans 73 residues: Capsid protein G8P (73 aa).

An N-terminal signal peptide occupies residues 1–23 (MKKSLVLKASVAVATLVPMLSFA). The Periplasmic portion of the chain corresponds to 24–44 (AEGDDPAKAAFDSLQASATEY). Residues 45–65 (IGYAWAMVVVIVGATIGIKLF) form a helical membrane-spanning segment. At 66–73 (KKFTSKAS) the chain is on the cytoplasmic side.

This sequence belongs to the inovirus capsid protein family. In terms of assembly, homomultimerizes. There are several thousands of this protein in the phage capsid.

The protein localises to the virion. It is found in the host membrane. In terms of biological role, self assembles to form a helical capsid wrapping up the viral genomic DNA. The capsid displays a filamentous structure with a length of 760-1950 nm and a width of 6-8 nm. The virion assembly and budding take place at the host inner membrane. The polypeptide is Capsid protein G8P (VIII) (Escherichia coli (Bacteriophage f1)).